An 874-amino-acid chain; its full sequence is Alanine--tRNA ligase (874 aa).

Zn(2+) is bound by residues His562, His566, Cys665, and His669.

This sequence belongs to the class-II aminoacyl-tRNA synthetase family. It depends on Zn(2+) as a cofactor.

It is found in the cytoplasm. The enzyme catalyses tRNA(Ala) + L-alanine + ATP = L-alanyl-tRNA(Ala) + AMP + diphosphate. Its function is as follows. Catalyzes the attachment of alanine to tRNA(Ala) in a two-step reaction: alanine is first activated by ATP to form Ala-AMP and then transferred to the acceptor end of tRNA(Ala). Also edits incorrectly charged Ser-tRNA(Ala) and Gly-tRNA(Ala) via its editing domain. This Pseudomonas savastanoi pv. phaseolicola (strain 1448A / Race 6) (Pseudomonas syringae pv. phaseolicola (strain 1448A / Race 6)) protein is Alanine--tRNA ligase.